The primary structure comprises 23 residues: Defensin D4 (23 aa).

This sequence belongs to the DEFL family. Group IV subfamily. Distributed in the epidermal cell layer of leaves and in the subepidermal layer region of stems. Not in roots.

Its subcellular location is the secreted. It is found in the cell wall. Functionally, antimicrobial peptide. Active against Fusarium spp., Gram-positive and Gram-negative bacterial pathogens. This chain is Defensin D4, found in Spinacia oleracea (Spinach).